The sequence spans 321 residues: Necdin (321 aa).

The segment at 1–96 (MSEQSKDLSD…QPGPAPPAPA (96 aa)) is disordered. Low complexity predominate over residues 20–35 (SEVHSSPGVSEGVPPS). In terms of domain architecture, MAGE spans 98–297 (LVQKAHELMW…QAWPSRYREA (200 aa)).

In terms of assembly, binds to the transactivation domains of E2F1 and p53. Binds also SV40 large T antigen and adenovirus E1A. Interacts with nucleobindin 1 and 2. In terms of tissue distribution, almost ubiquitous. Detected in fetal brain, lung, liver and kidney; in adult heart, brain, placenta, lung, liver, skeletal muscle, kidney, pancreas, spleen, thymus, prostate, testis, ovary, small intestine and colon. Not detected in peripheral blood leukocytes. In brain, restricted to post-mitotic neurons.

The protein localises to the perikaryon. The protein resides in the nucleus. Functionally, growth suppressor that facilitates the entry of the cell into cell cycle arrest. Functionally similar to the retinoblastoma protein it binds to and represses the activity of cell-cycle-promoting proteins such as SV40 large T antigen, adenovirus E1A, and the transcription factor E2F. Necdin also interacts with p53 and works in an additive manner to inhibit cell growth. Also functions as a transcription factor and directly binds to specific guanosine-rich DNA sequences. This chain is Necdin (NDN), found in Homo sapiens (Human).